Reading from the N-terminus, the 246-residue chain is tRNA (guanine-N(1)-)-methyltransferase (246 aa).

Residues glycine 117 and 137–142 (IGDYVL) each bind S-adenosyl-L-methionine.

The protein belongs to the RNA methyltransferase TrmD family. In terms of assembly, homodimer.

The protein resides in the cytoplasm. It catalyses the reaction guanosine(37) in tRNA + S-adenosyl-L-methionine = N(1)-methylguanosine(37) in tRNA + S-adenosyl-L-homocysteine + H(+). Specifically methylates guanosine-37 in various tRNAs. The sequence is that of tRNA (guanine-N(1)-)-methyltransferase from Acinetobacter baumannii (strain SDF).